We begin with the raw amino-acid sequence, 871 residues long: Bifunctional cordycepin biosynthesis cluster protein 3 (871 aa).

It participates in secondary metabolite biosynthesis. In terms of biological role, nucleoside/nucleotide kinase; part of the gene cluster that mediates the biosynthesis of cordycepin (COR) and pentostatin (PTN), two adenosine analogs with related bioactivity profiles as both mimic adenosine and can inhibit some of the processes that are adenosine dependent. Within the pathway, cns3 catalyzes both the first step of cordycepin biosynthesis by phosphorylating adenosine into 3'-AMP via its kinase activity and the conversion of adenosine into pentostatin via its ATP phosphoribosyltransferase activity. The first step of cordycepin biosynthesis involves hydroxyl phosphorylation of the 3'-OH position on adenosine to produce adenosine-3'-monophosphate (3'-AMP), catalyzed by kinase activity of cns3. Next, 3'-AMP is dephosphorylated to 2'-carbonyl-3'-deoxyadenosine (2'-C-3'-dA) by cns2, which is finally converted to cordycepin (3'-deoxyadenosine) by the oxidoreductase cns1. In Cordyceps militaris (strain CM01) (Caterpillar fungus), this protein is Bifunctional cordycepin biosynthesis cluster protein 3.